The chain runs to 552 residues: Putative acetolactate synthase large subunit IlvB2 (552 aa).

Residue Glu-48 coordinates thiamine diphosphate. FAD is bound by residues Phe-262 to Ser-285 and Asp-309 to Ser-328. The segment at Thr-394–Gln-474 is thiamine pyrophosphate binding. Asp-445 contacts Mg(2+).

Belongs to the TPP enzyme family. In terms of assembly, heterodimer of large catalytic subunit and small regulatory subunit. Mg(2+) serves as cofactor. It depends on thiamine diphosphate as a cofactor.

It carries out the reaction 2 pyruvate + H(+) = (2S)-2-acetolactate + CO2. The protein operates within amino-acid biosynthesis; L-isoleucine biosynthesis; L-isoleucine from 2-oxobutanoate: step 1/4. Its pathway is amino-acid biosynthesis; L-valine biosynthesis; L-valine from pyruvate: step 1/4. Its function is as follows. Catalyzes the conversion of 2 pyruvate molecules into acetolactate in the first common step of the biosynthetic pathway of the branched-amino acids such as leucine, isoleucine, and valine. In Mycobacterium tuberculosis (strain ATCC 25618 / H37Rv), this protein is Putative acetolactate synthase large subunit IlvB2 (ilvB2).